Consider the following 257-residue polypeptide: tRNA pseudouridine synthase A (257 aa).

The active-site Nucleophile is aspartate 53. Tyrosine 111 is a binding site for substrate.

The protein belongs to the tRNA pseudouridine synthase TruA family. As to quaternary structure, homodimer.

The catalysed reaction is uridine(38/39/40) in tRNA = pseudouridine(38/39/40) in tRNA. Formation of pseudouridine at positions 38, 39 and 40 in the anticodon stem and loop of transfer RNAs. In Xanthomonas campestris pv. campestris (strain 8004), this protein is tRNA pseudouridine synthase A.